A 425-amino-acid chain; its full sequence is MKTTAKLSFMMFVEWFIWGAWFVPLWLWLSKSGFSAGEIGWSYACTAIAAILSPILVGSITDRFFSAQKVLAVLMFAGALLMYFAAQQTTFAGFFPLLLAYSLTYMPTIALTNSIAFANVPDVERDFPRIRVMGTIGWIASGLACGFLPQILGYADISPTNIPLLITAGSSALLGVFAFFLPDTPPKSTGKMDIKVMLGLDALILLRDKNFLVFFFCSFLFAMPLAFYYIFANGYLTEVGMKNATGWMTLGQFSEIFFMLALPFFTKRFGIKKVLLLGLVTAAIRYGFFIYGSADEYFTYALLFLGILLHGVSYDFYYVTAYIYVDKKAPVHMRTAAQGLITLCCQGFGSLLGYRLGGVMMEKMFAYQEPVNGLTFNWSGMWTFGAVMIAIIAVLFMIFFRESDNEITAIKVDDRDIALTQGEVK.

Topologically, residues 1–8 (MKTTAKLS) are periplasmic. A helical transmembrane segment spans residues 9-29 (FMMFVEWFIWGAWFVPLWLWL). The Cytoplasmic portion of the chain corresponds to 30–38 (SKSGFSAGE). A helical transmembrane segment spans residues 39–59 (IGWSYACTAIAAILSPILVGS). The Periplasmic portion of the chain corresponds to 60-63 (ITDR). A helical transmembrane segment spans residues 64–84 (FFSAQKVLAVLMFAGALLMYF). At 85–90 (AAQQTT) the chain is on the cytoplasmic side. A helical transmembrane segment spans residues 91 to 111 (FAGFFPLLLAYSLTYMPTIAL). Residues 112 to 131 (TNSIAFANVPDVERDFPRIR) are Periplasmic-facing. Residues 132–152 (VMGTIGWIASGLACGFLPQIL) traverse the membrane as a helical segment. Residues 153–161 (GYADISPTN) lie on the Cytoplasmic side of the membrane. The helical transmembrane segment at 162–182 (IPLLITAGSSALLGVFAFFLP) threads the bilayer. Topologically, residues 183-210 (DTPPKSTGKMDIKVMLGLDALILLRDKN) are periplasmic. Residues 211 to 231 (FLVFFFCSFLFAMPLAFYYIF) traverse the membrane as a helical segment. Residues 232 to 244 (ANGYLTEVGMKNA) lie on the Cytoplasmic side of the membrane. Residues 245–265 (TGWMTLGQFSEIFFMLALPFF) form a helical membrane-spanning segment. Residues 266 to 287 (TKRFGIKKVLLLGLVTAAIRYG) lie on the Periplasmic side of the membrane. A helical membrane pass occupies residues 288-308 (FFIYGSADEYFTYALLFLGIL). The Cytoplasmic segment spans residues 309–339 (LHGVSYDFYYVTAYIYVDKKAPVHMRTAAQG). A helical membrane pass occupies residues 340–360 (LITLCCQGFGSLLGYRLGGVM). Over 361 to 379 (MEKMFAYQEPVNGLTFNWS) the chain is Periplasmic. Residues 380 to 400 (GMWTFGAVMIAIIAVLFMIFF) form a helical membrane-spanning segment. Residues 401–425 (RESDNEITAIKVDDRDIALTQGEVK) are Cytoplasmic-facing.

It belongs to the major facilitator superfamily. Nucleoside:H(+) symporter (NHS) (TC 2.A.1.10) family.

The protein localises to the cell inner membrane. Functionally, could be involved in nucleoside transport. This chain is Putative nucleoside transporter YegT (yegT), found in Escherichia coli (strain K12).